The chain runs to 164 residues: Diphosphoinositol polyphosphate phosphohydrolase 3-beta (164 aa).

Substrate contacts are provided by residues R9, 17-19 (KKR), and 38-40 (SSR). One can recognise a Nudix hydrolase domain in the interval 17–144 (KKRAACLCFR…VHAEYLQKLK (128 aa)). The Mg(2+) site is built by G49 and E65. The Nudix box signature appears at 50–71 (GGMEPEEEPGGAAVREVFEEAG). E68 serves as the catalytic Proton acceptor. E69 is a Mg(2+) binding site. Substrate is bound by residues 89-91 (RKH), R115, and K133. A disordered region spans residues 144-164 (KLGGSPTNGNSVAPSPPEGDP).

Belongs to the Nudix hydrolase family. DIPP subfamily. The cofactor is Mg(2+). Mn(2+) serves as cofactor.

The protein localises to the cytoplasm. It carries out the reaction diphospho-myo-inositol polyphosphate + H2O = myo-inositol polyphosphate + phosphate.. The catalysed reaction is P(1),P(6)-bis(5'-adenosyl) hexaphosphate + H2O = adenosine 5'-pentaphosphate + AMP + 2 H(+). The enzyme catalyses P(1),P(5)-bis(5'-adenosyl) pentaphosphate + H2O = adenosine 5'-tetraphosphate + AMP + 2 H(+). Cleaves a beta-phosphate from the diphosphate groups in PP-InsP5 (diphosphoinositol pentakisphosphate), suggesting that it may play a role in signal transduction. Also able to catalyze the hydrolysis of dinucleoside oligophosphates, with Ap6A and Ap5A being the preferred substrates. The major reaction products are ADP and p4a from Ap6A and ADP and ATP from Ap5A. Also able to hydrolyze 5-phosphoribose 1-diphosphate. The polypeptide is Diphosphoinositol polyphosphate phosphohydrolase 3-beta (Bos taurus (Bovine)).